Reading from the N-terminus, the 94-residue chain is Cell division topological specificity factor (94 aa).

It belongs to the MinE family.

Its function is as follows. Prevents the cell division inhibition by proteins MinC and MinD at internal division sites while permitting inhibition at polar sites. This ensures cell division at the proper site by restricting the formation of a division septum at the midpoint of the long axis of the cell. In Acetivibrio thermocellus (strain ATCC 27405 / DSM 1237 / JCM 9322 / NBRC 103400 / NCIMB 10682 / NRRL B-4536 / VPI 7372) (Clostridium thermocellum), this protein is Cell division topological specificity factor.